A 185-amino-acid polypeptide reads, in one-letter code: Cbp/p300-interacting transactivator 4 (185 aa).

2 disordered regions span residues 15-64 (PRPP…VAYG) and 95-130 (YPGR…AHAL). A compositionally biased stretch (pro residues) spans 103-125 (PGAPGGPSGPQPAPGAPAPPLQP).

This sequence belongs to the CITED family. Interacts via its C-terminal region with the CH1 domain of CREBBP and EP300. Interacts with all TFAP2/AP-2 isoforms.

It is found in the nucleus. The protein localises to the cytoplasm. Its function is as follows. Acts as a transcriptional coactivator for TFAP2/AP-2. Enhances estrogen-dependent transactivation mediated by estrogen receptors. May function as an inhibitor of transactivation by HIF1A by disrupting HIF1A interaction with CREBBP. May be involved in regulation of gene expression during development and differentiation of blood cells, endothelial cells and mammary epithelial cells. The sequence is that of Cbp/p300-interacting transactivator 4 (CITED4) from Bos taurus (Bovine).